The primary structure comprises 347 residues: Large ribosomal subunit protein uL3 (347 aa).

The protein belongs to the universal ribosomal protein uL3 family. As to quaternary structure, part of the 50S ribosomal subunit. Forms a cluster with proteins L14 and L24e.

Its function is as follows. One of the primary rRNA binding proteins, it binds directly near the 3'-end of the 23S rRNA, where it nucleates assembly of the 50S subunit. In Caldivirga maquilingensis (strain ATCC 700844 / DSM 13496 / JCM 10307 / IC-167), this protein is Large ribosomal subunit protein uL3.